A 288-amino-acid chain; its full sequence is Geranylgeranyl diphosphate synthase (288 aa).

Isopentenyl diphosphate contacts are provided by arginine 43 and histidine 73. Mg(2+) contacts are provided by aspartate 80 and aspartate 86. Arginine 91 contacts (2E,6E)-farnesyl diphosphate. Arginine 92 contributes to the isopentenyl diphosphate binding site. (2E,6E)-farnesyl diphosphate-binding residues include lysine 170, threonine 171, and glutamine 205.

The protein belongs to the FPP/GGPP synthase family. Requires Mg(2+) as cofactor.

The enzyme catalyses isopentenyl diphosphate + (2E,6E)-farnesyl diphosphate = (2E,6E,10E)-geranylgeranyl diphosphate + diphosphate. Its pathway is isoprenoid biosynthesis; geranylgeranyl diphosphate biosynthesis; geranylgeranyl diphosphate from farnesyl diphosphate and isopentenyl diphosphate: step 1/1. Catalyzes the condensation of farnesyl diphosphate (FPP) and isopentenyl diphosphate (IPP) to yield geranylgeranyl diphosphate (GGPP) needed for biosynthesis of carotenoids and diterpenes. The sequence is that of Geranylgeranyl diphosphate synthase (crtE) from Cereibacter sphaeroides (strain ATCC 17023 / DSM 158 / JCM 6121 / CCUG 31486 / LMG 2827 / NBRC 12203 / NCIMB 8253 / ATH 2.4.1.) (Rhodobacter sphaeroides).